Here is a 203-residue protein sequence, read N- to C-terminus: Pyridoxal 5'-phosphate synthase subunit PdxT (203 aa).

Residue 51 to 53 coordinates L-glutamine; that stretch reads GES. Cysteine 83 acts as the Nucleophile in catalysis. L-glutamine-binding positions include arginine 110 and 137–138; that span reads IR. Catalysis depends on charge relay system residues histidine 172 and glutamate 174.

The protein belongs to the glutaminase PdxT/SNO family. In the presence of PdxS, forms a dodecamer of heterodimers. Only shows activity in the heterodimer.

The catalysed reaction is aldehydo-D-ribose 5-phosphate + D-glyceraldehyde 3-phosphate + L-glutamine = pyridoxal 5'-phosphate + L-glutamate + phosphate + 3 H2O + H(+). It catalyses the reaction L-glutamine + H2O = L-glutamate + NH4(+). It participates in cofactor biosynthesis; pyridoxal 5'-phosphate biosynthesis. Catalyzes the hydrolysis of glutamine to glutamate and ammonia as part of the biosynthesis of pyridoxal 5'-phosphate. The resulting ammonia molecule is channeled to the active site of PdxS. This is Pyridoxal 5'-phosphate synthase subunit PdxT from Thermoplasma acidophilum (strain ATCC 25905 / DSM 1728 / JCM 9062 / NBRC 15155 / AMRC-C165).